The sequence spans 495 residues: D-hydantoinase/dihydropyrimidinase (495 aa).

The Zn(2+) site is built by His59, His61, and Lys150. Lys150 is subject to N6-carboxylysine. Tyr155 serves as a coordination point for substrate. Zn(2+)-binding residues include His183 and His239. Ser289 lines the substrate pocket. Asp316 is a Zn(2+) binding site. Asn337 is a binding site for substrate.

Belongs to the metallo-dependent hydrolases superfamily. Hydantoinase/dihydropyrimidinase family. In terms of assembly, homotetramer. The cofactor is Zn(2+). Post-translationally, carboxylation allows a single lysine to coordinate two zinc ions.

The catalysed reaction is 5,6-dihydrouracil + H2O = 3-(carbamoylamino)propanoate + H(+). Catalyzes the hydrolysis of dihydropyrimidines and of the structurally related DL-5-mono-substituted hydantoins, to produce N-carbamoyl-D-amino acids. This is D-hydantoinase/dihydropyrimidinase from Pseudomonas putida (Arthrobacter siderocapsulatus).